The primary structure comprises 221 residues: Thiamine-phosphate synthase (221 aa).

4-amino-2-methyl-5-(diphosphooxymethyl)pyrimidine-binding positions include 46 to 50 (QFREK) and Asn-82. 2 residues coordinate Mg(2+): Asp-83 and Asp-102. Ser-121 contacts 4-amino-2-methyl-5-(diphosphooxymethyl)pyrimidine. 148 to 150 (TQS) serves as a coordination point for 2-[(2R,5Z)-2-carboxy-4-methylthiazol-5(2H)-ylidene]ethyl phosphate. Position 151 (Lys-151) interacts with 4-amino-2-methyl-5-(diphosphooxymethyl)pyrimidine. Residues Gly-180 and 200–201 (IS) each bind 2-[(2R,5Z)-2-carboxy-4-methylthiazol-5(2H)-ylidene]ethyl phosphate.

Belongs to the thiamine-phosphate synthase family. Mg(2+) is required as a cofactor.

The enzyme catalyses 2-[(2R,5Z)-2-carboxy-4-methylthiazol-5(2H)-ylidene]ethyl phosphate + 4-amino-2-methyl-5-(diphosphooxymethyl)pyrimidine + 2 H(+) = thiamine phosphate + CO2 + diphosphate. The catalysed reaction is 2-(2-carboxy-4-methylthiazol-5-yl)ethyl phosphate + 4-amino-2-methyl-5-(diphosphooxymethyl)pyrimidine + 2 H(+) = thiamine phosphate + CO2 + diphosphate. It catalyses the reaction 4-methyl-5-(2-phosphooxyethyl)-thiazole + 4-amino-2-methyl-5-(diphosphooxymethyl)pyrimidine + H(+) = thiamine phosphate + diphosphate. The protein operates within cofactor biosynthesis; thiamine diphosphate biosynthesis; thiamine phosphate from 4-amino-2-methyl-5-diphosphomethylpyrimidine and 4-methyl-5-(2-phosphoethyl)-thiazole: step 1/1. Condenses 4-methyl-5-(beta-hydroxyethyl)thiazole monophosphate (THZ-P) and 2-methyl-4-amino-5-hydroxymethyl pyrimidine pyrophosphate (HMP-PP) to form thiamine monophosphate (TMP). The sequence is that of Thiamine-phosphate synthase from Pasteurella multocida (strain Pm70).